Here is a 666-residue protein sequence, read N- to C-terminus: LEAF RUST 10 DISEASE-RESISTANCE LOCUS RECEPTOR-LIKE PROTEIN KINASE-like 2.5 (666 aa).

The first 30 residues, Met-1–Ser-30, serve as a signal peptide directing secretion. The Extracellular portion of the chain corresponds to Ala-31–Leu-275. N-linked (GlcNAc...) asparagine glycosylation is found at Asn-119, Asn-141, Asn-171, and Asn-198. A helical transmembrane segment spans residues Phe-276–Ile-296. The Cytoplasmic segment spans residues Leu-297–Ala-666. The region spanning Lys-348–Leu-636 is the Protein kinase domain. ATP is bound by residues Ile-354–Val-362 and Lys-376. At Tyr-420 the chain carries Phosphotyrosine. Asp-471 acts as the Proton acceptor in catalysis. Residues Thr-508 and Thr-511 each carry the phosphothreonine modification.

The protein belongs to the protein kinase superfamily. Ser/Thr protein kinase family.

The protein localises to the membrane. The enzyme catalyses L-seryl-[protein] + ATP = O-phospho-L-seryl-[protein] + ADP + H(+). It catalyses the reaction L-threonyl-[protein] + ATP = O-phospho-L-threonyl-[protein] + ADP + H(+). The chain is LEAF RUST 10 DISEASE-RESISTANCE LOCUS RECEPTOR-LIKE PROTEIN KINASE-like 2.5 from Arabidopsis thaliana (Mouse-ear cress).